Consider the following 121-residue polypeptide: Basic phospholipase A2 homolog textilotoxin B chain (121 aa).

7 cysteine pairs are disulfide-bonded: Cys11–Cys72, Cys27–Cys120, Cys29–Cys45, Cys44–Cys101, Cys51–Cys94, Cys61–Cys87, and Cys80–Cys92.

Belongs to the phospholipase A2 family. Group I subfamily. N49 sub-subfamily. In terms of assembly, heterohexamer. 2 forms exist: 2 A or 2 B chains, 2 C chains and 2 covalently-linked D chains, and 1 A or 1 B, 1 C, 2 covalently-linked D chains and 2 differentially glycosylated covalently-linked D chains. Textilotoxin was originally described as pentameric. Expressed by the venom gland.

Its subcellular location is the secreted. In terms of biological role, snake venom oligomeric phospholipase A2 that has potent presynaptic neurotoxicity. Chain B is not itself neurotoxic, but it is essential for the neurotoxicity of textilotoxin. Subunit B possesses a very low phospholipase activity. This Pseudonaja textilis (Eastern brown snake) protein is Basic phospholipase A2 homolog textilotoxin B chain.